Consider the following 250-residue polypeptide: Diphthine synthase (250 aa).

S-adenosyl-L-methionine is bound by residues leucine 9, aspartate 85, valine 88, 113-114 (SI), leucine 165, alanine 202, and histidine 227.

It belongs to the diphthine synthase family. As to quaternary structure, homodimer.

The catalysed reaction is 2-[(3S)-amino-3-carboxypropyl]-L-histidyl-[translation elongation factor 2] + 3 S-adenosyl-L-methionine = diphthine-[translation elongation factor 2] + 3 S-adenosyl-L-homocysteine + 3 H(+). Its pathway is protein modification; peptidyl-diphthamide biosynthesis. Functionally, S-adenosyl-L-methionine-dependent methyltransferase that catalyzes the trimethylation of the amino group of the modified target histidine residue in translation elongation factor 2 (EF-2), to form an intermediate called diphthine. The three successive methylation reactions represent the second step of diphthamide biosynthesis. This chain is Diphthine synthase, found in Methanoregula boonei (strain DSM 21154 / JCM 14090 / 6A8).